The primary structure comprises 47 residues: Small, acid-soluble spore protein N (47 aa).

Residues 1-12 (MSNPKGSRKHFV) show a composition bias toward basic residues. A disordered region spans residues 1 to 47 (MSNPKGSRKHFVPNHIGTQPRAAGGNKGKQMQDQSGQHAQVIQTKGE). Over residues 29–47 (KQMQDQSGQHAQVIQTKGE) the composition is skewed to polar residues.

The protein belongs to the SspN family.

The protein resides in the spore core. This is Small, acid-soluble spore protein N from Geobacillus kaustophilus (strain HTA426).